The chain runs to 330 residues: Tetraacyldisaccharide 4'-kinase (330 aa).

58-65 lines the ATP pocket; the sequence is TVGGSGKT.

The protein belongs to the LpxK family.

The enzyme catalyses a lipid A disaccharide + ATP = a lipid IVA + ADP + H(+). It functions in the pathway glycolipid biosynthesis; lipid IV(A) biosynthesis; lipid IV(A) from (3R)-3-hydroxytetradecanoyl-[acyl-carrier-protein] and UDP-N-acetyl-alpha-D-glucosamine: step 6/6. Functionally, transfers the gamma-phosphate of ATP to the 4'-position of a tetraacyldisaccharide 1-phosphate intermediate (termed DS-1-P) to form tetraacyldisaccharide 1,4'-bis-phosphate (lipid IVA). This is Tetraacyldisaccharide 4'-kinase from Shewanella pealeana (strain ATCC 700345 / ANG-SQ1).